Reading from the N-terminus, the 139-residue chain is NADPH-dependent 7-cyano-7-deazaguanine reductase (139 aa).

Catalysis depends on Cys34, which acts as the Thioimide intermediate. The active-site Proton donor is Asp41. Residues 56–58 (IEL) and 75–76 (HE) contribute to the substrate site.

It belongs to the GTP cyclohydrolase I family. QueF type 1 subfamily.

Its subcellular location is the cytoplasm. The enzyme catalyses 7-aminomethyl-7-carbaguanine + 2 NADP(+) = 7-cyano-7-deazaguanine + 2 NADPH + 3 H(+). The protein operates within tRNA modification; tRNA-queuosine biosynthesis. Its function is as follows. Catalyzes the NADPH-dependent reduction of 7-cyano-7-deazaguanine (preQ0) to 7-aminomethyl-7-deazaguanine (preQ1). This chain is NADPH-dependent 7-cyano-7-deazaguanine reductase, found in Nitrosomonas eutropha (strain DSM 101675 / C91 / Nm57).